The sequence spans 63 residues: Large ribosomal subunit protein bL32 (63 aa).

Residues 1–27 form a disordered region; sequence MANPKAKMSKSRRDKRRAQFNARTKPA. The segment covering 7–18 has biased composition (basic residues); it reads KMSKSRRDKRRA.

The protein belongs to the bacterial ribosomal protein bL32 family.

This is Large ribosomal subunit protein bL32 from Pelodictyon phaeoclathratiforme (strain DSM 5477 / BU-1).